A 252-amino-acid chain; its full sequence is Triosephosphate isomerase (252 aa).

10–12 (NWK) provides a ligand contact to substrate. The active-site Electrophile is the H96. E168 acts as the Proton acceptor in catalysis. Residues G174, S214, and 235-236 (GG) each bind substrate.

It belongs to the triosephosphate isomerase family. As to quaternary structure, homodimer.

Its subcellular location is the cytoplasm. The catalysed reaction is D-glyceraldehyde 3-phosphate = dihydroxyacetone phosphate. It participates in carbohydrate biosynthesis; gluconeogenesis. The protein operates within carbohydrate degradation; glycolysis; D-glyceraldehyde 3-phosphate from glycerone phosphate: step 1/1. In terms of biological role, involved in the gluconeogenesis. Catalyzes stereospecifically the conversion of dihydroxyacetone phosphate (DHAP) to D-glyceraldehyde-3-phosphate (G3P). The chain is Triosephosphate isomerase from Streptococcus equi subsp. zooepidemicus (strain MGCS10565).